The following is an 83-amino-acid chain: Hainantoxin-III 9 (83 aa).

An N-terminal signal peptide occupies residues 1 to 21 (MKASMFLALAGLALLFVVCYA). Residues 22 to 48 (SESEEKEFPIELLSKIFAVDVFKGEER) constitute a propeptide that is removed on maturation. 3 disulfide bridges follow: cysteine 50/cysteine 65, cysteine 57/cysteine 70, and cysteine 64/cysteine 77. Leucine 81 is modified (leucine amide).

The protein belongs to the neurotoxin 10 (Hwtx-1) family. 15 (Hntx-3) subfamily. Monomer. As to expression, expressed by the venom gland.

It localises to the secreted. Functionally, selective antagonist of neuronal tetrodotoxin (TTX)-sensitive voltage-gated sodium channels (IC(50)=1270 nM on Nav1.1/SCN1A, 270 nM on Nav1.2/SCN2A, 491 nM on Nav1.3/SCN3A and 232 nM on Nav1.7/SCN9A). This toxin suppress Nav1.7 current amplitude without significantly altering the activation, inactivation, and repriming kinetics. Short extreme depolarizations partially activate the toxin-bound channel, indicating voltage-dependent inhibition of this toxin. This toxin increases the deactivation of the Nav1.7 current after extreme depolarizations. The toxin-Nav1.7 complex is gradually dissociated upon prolonged strong depolarizations in a voltage-dependent manner, and the unbound toxin rebinds to Nav1.7 after a long repolarization. Moreover, analysis of chimeric channels showed that the DIIS3-S4 linker is critical for toxin binding to Nav1.7. These data are consistent with this toxin interacting with Nav1.7 site 4 and trapping the domain II voltage sensor in the closed state. The sequence is that of Hainantoxin-III 9 from Cyriopagopus hainanus (Chinese bird spider).